Here is a 1482-residue protein sequence, read N- to C-terminus: Pregnancy zone protein (1482 aa).

A signal peptide spans 1-25 (MRKDRLLHLCLVLLLILLSASDSNS). N-linked (GlcNAc...) asparagine glycosylation is found at asparagine 54, asparagine 69, asparagine 246, asparagine 392, and asparagine 406. Residues 685-735 (CSVIPSVSAGAVGQGYYGAGLGVVERPYVPQLGTYNVIPLNNEQSSGPVPE) form a bait region region. 3 N-linked (GlcNAc...) asparagine glycosylation sites follow: asparagine 753, asparagine 875, and asparagine 932. The isoglutamyl cysteine thioester (Cys-Gln) cross-link spans 978-981 (CGEQ). 2 N-linked (GlcNAc...) asparagine glycosylation sites follow: asparagine 997 and asparagine 1430.

Belongs to the protease inhibitor I39 (alpha-2-macroglobulin) family. As to quaternary structure, homotetramer, which consists of two pairs of disulfide-linked chains. In terms of tissue distribution, plasma. Prominent constituent of late-pregnancy sera.

It localises to the secreted. Functionally, is able to inhibit all four classes of proteinases by a unique 'trapping' mechanism. This protein has a peptide stretch, called the 'bait region' which contains specific cleavage sites for different proteinases. When a proteinase cleaves the bait region, a conformational change is induced in the protein which traps the proteinase. The entrapped enzyme remains active against low molecular weight substrates (activity against high molecular weight substrates is greatly reduced). Following cleavage in the bait region a thioester bond is hydrolyzed and mediates the covalent binding of the protein to the proteinase. The chain is Pregnancy zone protein (PZP) from Homo sapiens (Human).